Reading from the N-terminus, the 880-residue chain is DNA mismatch repair protein MutS (880 aa).

Position 605–612 (605–612) interacts with ATP; that stretch reads GPNMSGKS. Residues 790–829 are disordered; sequence QETAAVPSRGVEPPAPVIEPTPAKEQTPVKEQTTPLVEES. Positions 818 to 829 are enriched in polar residues; the sequence is VKEQTTPLVEES.

The protein belongs to the DNA mismatch repair MutS family.

This protein is involved in the repair of mismatches in DNA. It is possible that it carries out the mismatch recognition step. This protein has a weak ATPase activity. The polypeptide is DNA mismatch repair protein MutS (Limosilactobacillus fermentum (strain NBRC 3956 / LMG 18251) (Lactobacillus fermentum)).